Reading from the N-terminus, the 101-residue chain is Gastrin (101 aa).

Residues 1-21 (MQRLCVYVLIFALALAAFSEA) form the signal peptide. The segment at 22-82 (SWKPRSQQPD…SKKQGPWLEE (61 aa)) is disordered. A Pyrrolidone carboxylic acid; in form big gastrin modification is found at glutamine 59. Residue glutamine 76 is modified to Pyrrolidone carboxylic acid; in form gastrin. Tyrosine 87 carries the post-translational modification Sulfotyrosine; partial. Position 92 is a phenylalanine amide (phenylalanine 92). The residue at position 96 (serine 96) is a Phosphoserine. Positions 96–101 (SAEDEN) are cleaved as a propeptide — removed in mature form.

The protein belongs to the gastrin/cholecystokinin family. In terms of processing, two different processing pathways probably exist in antral G-cells. In the dominant pathway progastrin is cleaved at three sites resulting in two major bioactive gastrins, gastrin-34 and gastrin-17. In the putative alternative pathway, progastrin may be processed only at the most C-terminal dibasic site resulting in the synthesis of gastrin-71. Post-translationally, sulfation enhances proteolytic processing, and blocks peptide degradation. Levels of sulfation differ between proteolytically-cleaved gastrins. Thus, gastrin-6 is almost 73% sulfated, whereas the larger gastrins are less than 50% sulfated. Sulfation levels are also tissue-specific.

The protein localises to the secreted. Functionally, gastrin stimulates the stomach mucosa to produce and secrete hydrochloric acid and the pancreas to secrete its digestive enzymes. It also stimulates smooth muscle contraction and increases blood circulation and water secretion in the stomach and intestine. The protein is Gastrin (GAST) of Homo sapiens (Human).